Here is a 457-residue protein sequence, read N- to C-terminus: Proton extrusion protein PxcA (457 aa).

4 consecutive transmembrane segments (helical) span residues 239 to 259, 332 to 352, 368 to 390, and 417 to 437; these read FILL…TFFL, INAI…GVVI, GILY…DMFV, and FNFL…KYWI.

This sequence belongs to the CemA family.

It localises to the cell inner membrane. In terms of biological role, required for H(+) efflux immediately after light irradiation to form a rapid H(+) concentration gradient across the thylakoid membranes. Together with PxcL, contributes to transient H(+) uptake following dark to light transition. The chain is Proton extrusion protein PxcA from Gloeothece citriformis (strain PCC 7424) (Cyanothece sp. (strain PCC 7424)).